Here is a 497-residue protein sequence, read N- to C-terminus: Glycerol kinase (497 aa).

Threonine 12 contacts ADP. Residues threonine 12, threonine 13, and serine 14 each contribute to the ATP site. A sn-glycerol 3-phosphate-binding site is contributed by threonine 12. Residue arginine 16 coordinates ADP. The sn-glycerol 3-phosphate site is built by arginine 82, glutamate 83, tyrosine 134, and aspartate 243. Residues arginine 82, glutamate 83, tyrosine 134, aspartate 243, and glutamine 244 each contribute to the glycerol site. Positions 265 and 308 each coordinate ADP. Threonine 265, glycine 308, glutamine 312, and glycine 409 together coordinate ATP. Residues glycine 409 and asparagine 413 each coordinate ADP.

It belongs to the FGGY kinase family.

The enzyme catalyses glycerol + ATP = sn-glycerol 3-phosphate + ADP + H(+). It participates in polyol metabolism; glycerol degradation via glycerol kinase pathway; sn-glycerol 3-phosphate from glycerol: step 1/1. Inhibited by fructose 1,6-bisphosphate (FBP). In terms of biological role, key enzyme in the regulation of glycerol uptake and metabolism. Catalyzes the phosphorylation of glycerol to yield sn-glycerol 3-phosphate. This chain is Glycerol kinase, found in Oleidesulfovibrio alaskensis (strain ATCC BAA-1058 / DSM 17464 / G20) (Desulfovibrio alaskensis).